The sequence spans 1202 residues: MIEFWRSEYTRILSICPDPGKKYRNKNVRMWSLYLERVREVIWKTKQEFKAEYSFPKTSLAANKVDDVSPKFVMEVMDVFVENLNVLMKINDPCLWLFVPGHMKEQIEQVLKELKLLRFFVCFVSSKCIEPQYRRTTFYTHALIEASHNAMVVWLHLPVYGNKNQDLAPTEVSRLLSDFMEMKIKSIQPGNSIYIDVLQALKSTIPQAQQKHAAESGIVEIPIHSLTVGLSDQMANLQEMICLLRDNLIHLPILDLEFHLQDMDSVILDAGLLIYSFYDIKGEKEDTMLEDINRALGFDLPRNIEPIKAMVYLVMQKAFQCNLPRVHGLGYVDFLLKNLKDFQGRYSDSLAFLKNQLQVIQTEFESLQPFLKVVAEEPHNKLKTLNEDCATQIIRKSYEDIIEEITCIKAKIQEKNTVEDTMKTVIARTSSQLARTLRMNEEIVGFEDVIEKLRNRLLNRTKGQDVISIHGMPGLGKTTLANRLYSDMSVVSQFDICARCCVSQVYSYKDLLLSLIRDAIGENSDQHRELIRDAIGENSDQHRELCANELADKLRKTLLRRRYLILVDDVWENSVWDDLRGWFPDANNRSRIILMTRHHEVAKYASVHGDPLHLRMLDEDESWKLLEKKVFGEQSCSSPLLKNVGLRIAKMCGQLPLSIVLVAGILSEMEKEVECWEQVANNLGSHIHNDSRAIVDQSYHVLPCHLKSCFLYFGAFLEDRVIDISRLIGLWISESFIKSCEGRRLEYIAEGYLENLIGRNLVMVTQRAISDGKVKACRLHDVLLDFCKKRAAEENFLLWINRDQSTKAVYSHKQHAHLAFTEMDNLVEWSASCSLVGSVLFKSYDPYFRPLSSHAFAISHILLNFKFLKVLDLEHQVIIDFIPTELFYLRYLSAHIDQNSIPSSISNLWNLETLILKSRSASKHNRVLLPSTVWDMVKLRHLHIPYFSTEDEEALLENSAKLYDLETLSSPYFSRVEDAELMLRRTPNLRKLICEVQCLESPHQYHVLNFPIRLEILKLYNRSKAFKTIPFCISAPNLKYLKLSRFYLDSQYLSETADHLKHLEVLKLSCVEFGDHGEWEVSNGMFPQLKILKLEYVSLMKWIVADDVFPNLEQLVLRGCRHLMEIPSCFMDILSLKYIKVDEYSESVVQSARKIQETQIEEYQNNNFKLVIIKVHYREKLNELFSLLSLTVLGLVLHPIFL.

Coiled coils occupy residues 345-368 (RYSD…ESLQ) and 437-459 (LRMN…RLLN). The NB-ARC domain maps to 426–741 (IARTSSQLAR…ISESFIKSCE (316 aa)). 471-478 (GMPGLGKT) is an ATP binding site. LRR repeat units lie at residues 865–889 (FKFL…LFYL), 908–936 (LWNL…VWDM), 1011–1036 (PIRL…ISAP), 1040–1059 (YLKL…TADH), 1060–1084 (LKHL…VSNG), 1086–1111 (FPQL…VFPN), and 1128–1151 (SCFM…VVQS).

The protein belongs to the disease resistance NB-LRR family.

Its subcellular location is the cytoplasm. It localises to the membrane. Functionally, confers resistance to late blight (Phytophthora infestans) races carrying the avirulence gene Avr1. Resistance proteins guard the plant against pathogens that contain an appropriate avirulence protein via an indirect interaction with this avirulence protein. That triggers a defense system including the hypersensitive response, which restricts the pathogen growth. The polypeptide is Putative late blight resistance protein homolog R1B-8 (R1B-8) (Solanum demissum (Wild potato)).